A 271-amino-acid polypeptide reads, in one-letter code: MSNSPIQAVIFDWAGTIVDFGSFAPTSIFVEAFKQGFDFDIDLEEAREPMGLGKWDHIQAVGRIPAVDKRWNEKFGRSMTNEDIDAIYAAFMPLQKAKVADHAEPILNAVEVVNGLKDKGIKIGSCSGYPREVMDVLIPVAADYGYQPDYVVATDDLPQGGRPAPFMALKNVIELDVTDVKACVKVDDSAPGIFEGHNAGMWTVGLLLSGNEAGLTFEEYQAADEATLEKAREKARAKFIKSAPHYLIDTISDLPEVIVDIEQRLAAGERP.

D12 serves as the catalytic Nucleophile. Mg(2+)-binding residues include D12 and A14. K54 serves as the catalytic Schiff-base intermediate with substrate. D188 is a binding site for Mg(2+).

It belongs to the HAD-like hydrolase superfamily. PhnX family. In terms of assembly, homodimer. Requires Mg(2+) as cofactor.

It catalyses the reaction phosphonoacetaldehyde + H2O = acetaldehyde + phosphate + H(+). Its function is as follows. Involved in phosphonate degradation. This Vibrio parahaemolyticus serotype O3:K6 (strain RIMD 2210633) protein is Phosphonoacetaldehyde hydrolase.